A 309-amino-acid polypeptide reads, in one-letter code: Mitochondrial brown fat uncoupling protein 1 (309 aa).

The Mitochondrial intermembrane portion of the chain corresponds to 1-10 (MLRAPGSDAP). The helical transmembrane segment at 11-32 (PTLSVRIAAAAGAACLADMITF) threads the bilayer. Solcar repeat units lie at residues 11–104 (PTLS…VREW), 113–203 (ASLG…MKEA), and 212–297 (DDLP…LKRE). Topologically, residues 33–75 (PLDTAKVRLQIQGEGQGQPPRAPRYRGVLGTVATLARTEGLQK) are mitochondrial matrix. Arginine 58 contacts fatty acid 16:0. Residues 76-98 (LYSGLPAGLQRQVGFASLRIGLY) form a helical membrane-spanning segment. Residues 99-118 (DSVREWLSPGQGAAASLGSR) are Mitochondrial intermembrane-facing. Residues 119 to 135 (ISAGVMTGGAAVFIGQP) form a helical membrane-spanning segment. Residues 136 to 180 (TEVVKVRLQAQSHLHGRKPRYTGTYNAYRIIATTEGLTGLWKGTT) lie on the Mitochondrial matrix side of the membrane. The chain crosses the membrane as a helical span at residues 181-197 (PNLMRNVIINCTELVTY). Residues 198–214 (DLMKEALVKNHLLADDL) are Mitochondrial intermembrane-facing. Residues 215-234 (PCHFLSALVAGFCTTVLSSP) traverse the membrane as a helical segment. The Mitochondrial matrix segment spans residues 235-268 (VDVVKTRFVNSVPEQYTSVPNCAMTMLTKEGPLA). Cysteine 256 is subject to Cysteine sulfenic acid (-SOH). Residues 269-291 (FFKGFVPSFLRLGSWNVIMFVCF) traverse the membrane as a helical segment. A fatty acid 16:0-binding site is contributed by lysine 271. Residues 292 to 309 (EQLKRELMKSGRTVDCAT) are Mitochondrial intermembrane-facing.

This sequence belongs to the mitochondrial carrier (TC 2.A.29) family. Most probably functions as a monomer. Binds one purine nucleotide per monomer. However, has also been suggested to function as a homodimer or a homotetramer. Tightly associates with cardiolipin in the mitochondrion inner membrane; may stabilize and regulate its activity. May undergo sulfenylation upon cold exposure. May increase the sensitivity of UCP1 thermogenic function to the activation by noradrenaline probably through structural effects. In terms of processing, may undergo ubiquitin-mediated proteasomal degradation.

It is found in the mitochondrion inner membrane. The enzyme catalyses H(+)(in) = H(+)(out). Has no constitutive proton transporter activity and has to be activated by long-chain fatty acids/LCFAs. Inhibited by purine nucleotides. Both purine nucleotides and LCFAs bind the cytosolic side of the transporter and directly compete to activate or inhibit it. Activated by noradrenaline and reactive oxygen species. Despite lacking canonical translational encoding for selenocysteine, a small pool of the protein has been observed to selectively incorporate selenocysteine at 'Cys-256'. Selenocysteine-modified protein is highly sensitive to redox modification and may constitute a pool of protein highly sensitive to activation by elevated levels of reactive oxygen species (ROS). Its function is as follows. Mitochondrial protein responsible for thermogenic respiration, a specialized capacity of brown adipose tissue and beige fat that participates in non-shivering adaptive thermogenesis to temperature and diet variations and more generally to the regulation of energy balance. Functions as a long-chain fatty acid/LCFA and proton symporter, simultaneously transporting one LCFA and one proton through the inner mitochondrial membrane. However, LCFAs remaining associated with the transporter via their hydrophobic tails, it results in an apparent transport of protons activated by LCFAs. Thereby, dissipates the mitochondrial proton gradient and converts the energy of substrate oxydation into heat instead of ATP. Regulates the production of reactive oxygen species/ROS by mitochondria. The polypeptide is Mitochondrial brown fat uncoupling protein 1 (Canis lupus familiaris (Dog)).